Reading from the N-terminus, the 415-residue chain is Histidine--tRNA ligase (415 aa).

It belongs to the class-II aminoacyl-tRNA synthetase family. Homodimer.

It localises to the cytoplasm. It catalyses the reaction tRNA(His) + L-histidine + ATP = L-histidyl-tRNA(His) + AMP + diphosphate + H(+). The chain is Histidine--tRNA ligase from Clostridium botulinum (strain ATCC 19397 / Type A).